Consider the following 316-residue polypeptide: Protoheme IX farnesyltransferase (316 aa).

9 helical membrane-spanning segments follow: residues 32 to 52 (VMSL…THVN), 53 to 73 (PIIG…SGAL), 98 to 118 (VARE…VITL), 120 to 140 (FVAN…YVVI), 153 to 173 (IVIG…AVAG), 180 to 200 (LALF…LALV), 226 to 246 (ILLY…IGFA), 251 to 271 (GLLS…VYLA), and 280 to 300 (VAMR…AAIV).

The protein belongs to the UbiA prenyltransferase family. Protoheme IX farnesyltransferase subfamily.

Its subcellular location is the cell inner membrane. The enzyme catalyses heme b + (2E,6E)-farnesyl diphosphate + H2O = Fe(II)-heme o + diphosphate. It functions in the pathway porphyrin-containing compound metabolism; heme O biosynthesis; heme O from protoheme: step 1/1. Functionally, converts heme B (protoheme IX) to heme O by substitution of the vinyl group on carbon 2 of heme B porphyrin ring with a hydroxyethyl farnesyl side group. The sequence is that of Protoheme IX farnesyltransferase from Methylocella silvestris (strain DSM 15510 / CIP 108128 / LMG 27833 / NCIMB 13906 / BL2).